Reading from the N-terminus, the 464-residue chain is Argininosuccinate lyase (464 aa).

The protein belongs to the lyase 1 family. Argininosuccinate lyase subfamily.

It is found in the cytoplasm. It carries out the reaction 2-(N(omega)-L-arginino)succinate = fumarate + L-arginine. It participates in amino-acid biosynthesis; L-arginine biosynthesis; L-arginine from L-ornithine and carbamoyl phosphate: step 3/3. The polypeptide is Argininosuccinate lyase (Pseudomonas savastanoi pv. phaseolicola (strain 1448A / Race 6) (Pseudomonas syringae pv. phaseolicola (strain 1448A / Race 6))).